Consider the following 293-residue polypeptide: Short-chain dehydrogenase/reductase PhomF (293 aa).

NADP(+) contacts are provided by isoleucine 31 and asparagine 102. Serine 175 functions as the Proton donor in the catalytic mechanism. Residues tyrosine 190, lysine 194, and serine 225 each contribute to the NADP(+) site. The Proton acceptor role is filled by tyrosine 190. Lysine 194 functions as the Lowers pKa of active site Tyr in the catalytic mechanism.

The protein belongs to the short-chain dehydrogenases/reductases (SDR) family.

Short-chain dehydrogenase/reductase; part of the gene cluster that mediates the biosynthesis of the phomopsins, a group of hexapeptide mycotoxins which infects lupins and causes lupinosis disease in livestock. The role of phomF within the phomopsins biosynthesis pathway has still to be determined. The pathway starts with the processing of the precursor phomA by several endopeptidases including kexin proteases as well as the cluster-specific S41 family peptidase phomP1 and the oligopeptidase phomG to produce 10 identical copies of the hexapeptide Tyr-Val-Ile-Pro-Ile-Asp. After being excised from the precursor peptide, the core peptides are cyclized and modified post-translationally by enzymes encoded within the gene cluster. The timing and order of proteolysis of the phomA precursor and PTMs are still unknown. Two tyrosinase-like enzymes, phomQ1 and phomQ2, catalyze the chlorination and hydroxylation of Tyr, respectively. PhomYb, is proposed to be involved in the construction of the macrocyclic structure. The other 4 ustYa family proteins may be involved in PTMs that generate the unique structure of phomopsin A. PhomYa is required for the hydroxylation of C-beta of Tyr. PhomYc, phomYd, and phomYe are responsible for the biosynthesis of 2,3-dehydroisoleucine (dIle), 2,3-dehydroaspartic acid (dAsp), and 3,4-dehydroproline (dPro), respectively. While dIle formation by phomYc is indispensable for the installation of dAsp by phomYd, the order of the other PTMs have not been elucidated yet. Most of the biosynthetic enzymes likely have broad substrate specificity, and thus, there might be a metabolic grid from a precursor to phomopsin A. The enzyme(s) responsible for the biosynthesis of 3,4-dehydrovaline (dVal) have also not been identified yet. Finally, phomM acts as an S-adenosylmethionine-dependent alpha-N-methyltransferase that catalyzes two successive N-methylation reactions, converting N-desmethyl-phomopsin A to phomopsin A and phomopsin A further to an N,N-dimethylated congener called phomopsin E. This Diaporthe leptostromiformis (Lupinosis disease fungus) protein is Short-chain dehydrogenase/reductase PhomF.